Consider the following 201-residue polypeptide: dTTP/UTP pyrophosphatase (201 aa).

The active-site Proton acceptor is the Asp-81.

The protein belongs to the Maf family. YhdE subfamily. A divalent metal cation is required as a cofactor.

It localises to the cytoplasm. It carries out the reaction dTTP + H2O = dTMP + diphosphate + H(+). The catalysed reaction is UTP + H2O = UMP + diphosphate + H(+). Functionally, nucleoside triphosphate pyrophosphatase that hydrolyzes dTTP and UTP. May have a dual role in cell division arrest and in preventing the incorporation of modified nucleotides into cellular nucleic acids. The chain is dTTP/UTP pyrophosphatase from Dechloromonas aromatica (strain RCB).